The following is a 316-amino-acid chain: MLNLRVVYLGTPQFAATVLETLVDARIHVVGVVTRADKPQKRSSKPIASPVKQLALSKNIPLLQPTKTTDPAFLAQLREWQADVFVVVAYGVILKQELLDIPKYGCYNLHAGLLPAYRGAAPIQRCIIAGETLSGNTVIRMDAGMDTGDIANVNHVAIGEDMTAGELAEALAGSGGELILKTLQEIEAGTVRHIPQDSAKATLAPKLTKEEGLVKWDAPASQVYAHIRGVSPAPGAWTRFLSQGKEPRRLGILSARMESSSGSHSPGEVLGVSGEDLLVACRQGVLRLCIVQPEGKVFMKAKDFFNGQSRSVALLF.

Residue 112-115 coordinates (6S)-5,6,7,8-tetrahydrofolate; it reads GLLP.

This sequence belongs to the Fmt family.

The enzyme catalyses L-methionyl-tRNA(fMet) + (6R)-10-formyltetrahydrofolate = N-formyl-L-methionyl-tRNA(fMet) + (6S)-5,6,7,8-tetrahydrofolate + H(+). Functionally, attaches a formyl group to the free amino group of methionyl-tRNA(fMet). The formyl group appears to play a dual role in the initiator identity of N-formylmethionyl-tRNA by promoting its recognition by IF2 and preventing the misappropriation of this tRNA by the elongation apparatus. The polypeptide is Methionyl-tRNA formyltransferase (Chlamydia muridarum (strain MoPn / Nigg)).